We begin with the raw amino-acid sequence, 227 residues long: Cytochrome c oxidase subunit 2 (227 aa).

The Mitochondrial intermembrane portion of the chain corresponds to 1–14; sequence MAYPFQLGLQDATS. The helical transmembrane segment at 15–45 threads the bilayer; that stretch reads PIMEELTSFHDHTLMIVFLISSLVLYIILLM. Residues 46–59 are Mitochondrial matrix-facing; it reads LTTKLTHTSTMDAQ. A helical transmembrane segment spans residues 60 to 87; sequence EVETIWTILPAVILILIALPSLRILYMM. Topologically, residues 88 to 227 are mitochondrial intermembrane; the sequence is DEINNPALTV…HFENWSASMI (140 aa). Positions 161, 196, 198, 200, 204, and 207 each coordinate Cu cation. Glu-198 contributes to the Mg(2+) binding site.

Belongs to the cytochrome c oxidase subunit 2 family. As to quaternary structure, component of the cytochrome c oxidase (complex IV, CIV), a multisubunit enzyme composed of 14 subunits. The complex is composed of a catalytic core of 3 subunits MT-CO1, MT-CO2 and MT-CO3, encoded in the mitochondrial DNA, and 11 supernumerary subunits COX4I, COX5A, COX5B, COX6A, COX6B, COX6C, COX7A, COX7B, COX7C, COX8 and NDUFA4, which are encoded in the nuclear genome. The complex exists as a monomer or a dimer and forms supercomplexes (SCs) in the inner mitochondrial membrane with NADH-ubiquinone oxidoreductase (complex I, CI) and ubiquinol-cytochrome c oxidoreductase (cytochrome b-c1 complex, complex III, CIII), resulting in different assemblies (supercomplex SCI(1)III(2)IV(1) and megacomplex MCI(2)III(2)IV(2)). Found in a complex with TMEM177, COA6, COX18, COX20, SCO1 and SCO2. Interacts with TMEM177 in a COX20-dependent manner. Interacts with COX20. Interacts with COX16. Cu cation is required as a cofactor.

The protein resides in the mitochondrion inner membrane. The enzyme catalyses 4 Fe(II)-[cytochrome c] + O2 + 8 H(+)(in) = 4 Fe(III)-[cytochrome c] + 2 H2O + 4 H(+)(out). Functionally, component of the cytochrome c oxidase, the last enzyme in the mitochondrial electron transport chain which drives oxidative phosphorylation. The respiratory chain contains 3 multisubunit complexes succinate dehydrogenase (complex II, CII), ubiquinol-cytochrome c oxidoreductase (cytochrome b-c1 complex, complex III, CIII) and cytochrome c oxidase (complex IV, CIV), that cooperate to transfer electrons derived from NADH and succinate to molecular oxygen, creating an electrochemical gradient over the inner membrane that drives transmembrane transport and the ATP synthase. Cytochrome c oxidase is the component of the respiratory chain that catalyzes the reduction of oxygen to water. Electrons originating from reduced cytochrome c in the intermembrane space (IMS) are transferred via the dinuclear copper A center (CU(A)) of subunit 2 and heme A of subunit 1 to the active site in subunit 1, a binuclear center (BNC) formed by heme A3 and copper B (CU(B)). The BNC reduces molecular oxygen to 2 water molecules using 4 electrons from cytochrome c in the IMS and 4 protons from the mitochondrial matrix. The chain is Cytochrome c oxidase subunit 2 (MT-CO2) from Anisomys imitator (Uneven-toothed rat).